The sequence spans 901 residues: Modifier of cell death (901 aa).

Disordered regions lie at residues 147–169 (AQKRGRFPPQARSSLSPQKPRAA) and 218–245 (PRKSAPWQEETAANGGPQSTSLIRSPSP). Residues 259-282 (FKCAECGDGFPVMDRLCDHMIKQH) form a C2H2-type zinc finger. Disordered regions lie at residues 494-528 (KKEHMDYDEPDPNIPSTSAQALGYNPDDDEGDDVP), 682-717 (QERVHQPERRPRRSAAPASPAKPQYRPQPPARSHEE), and 779-901 (HKAI…WDDN). The segment covering 817-828 (EAAAKLIQAENE) has biased composition (low complexity). Residues 829–840 (MVVEEEEVEEPP) show a composition bias toward acidic residues. Residues 846–866 (QVPKEKEVEVAEAEKLPEQVK) show a composition bias toward basic and acidic residues.

In terms of biological role, promotes programmed cell death. Its role in programmed cell death may be in conjunction with cell cycle regulatory factor efl-1 and the synthetic multivulva class B proteins dpl-1 and lin-35, and is independent of the ced-1, ced-8 and ced-9 pathways. The protein is Modifier of cell death of Caenorhabditis elegans.